A 295-amino-acid chain; its full sequence is Shikimate dehydrogenase (NADP(+)) (295 aa).

Residues 22–24 and Ser-69 contribute to the shikimate site; that span reads SLS. The Proton acceptor role is filled by Lys-73. Positions 94 and 111 each coordinate shikimate. NADP(+) is bound by residues 135 to 139 and Val-236; that span reads GAGGA. Tyr-238 is a binding site for shikimate. Residue Gly-260 coordinates NADP(+).

The protein belongs to the shikimate dehydrogenase family. In terms of assembly, homodimer.

The enzyme catalyses shikimate + NADP(+) = 3-dehydroshikimate + NADPH + H(+). It participates in metabolic intermediate biosynthesis; chorismate biosynthesis; chorismate from D-erythrose 4-phosphate and phosphoenolpyruvate: step 4/7. In terms of biological role, involved in the biosynthesis of the chorismate, which leads to the biosynthesis of aromatic amino acids. Catalyzes the reversible NADPH linked reduction of 3-dehydroshikimate (DHSA) to yield shikimate (SA). The polypeptide is Shikimate dehydrogenase (NADP(+)) (Streptococcus uberis (strain ATCC BAA-854 / 0140J)).